We begin with the raw amino-acid sequence, 82 residues long: Small ribosomal subunit protein bS18 (82 aa).

Residues 1–20 (MVDINQIPTRRPFHRRHKTC) are disordered.

The protein belongs to the bacterial ribosomal protein bS18 family. In terms of assembly, part of the 30S ribosomal subunit. Forms a tight heterodimer with protein bS6.

In terms of biological role, binds as a heterodimer with protein bS6 to the central domain of the 16S rRNA, where it helps stabilize the platform of the 30S subunit. The protein is Small ribosomal subunit protein bS18 of Brucella suis (strain ATCC 23445 / NCTC 10510).